The chain runs to 62 residues: Cytochrome b-c1 complex subunit 6-2, mitochondrial (62 aa).

Intrachain disulfides connect cysteine 17/cysteine 59 and cysteine 31/cysteine 45.

It belongs to the UQCRH/QCR6 family. In terms of assembly, component of the ubiquinol-cytochrome c oxidoreductase (cytochrome b-c1 complex, complex III, CIII), a multisubunit enzyme composed of 10 subunits. The complex is composed of 3 respiratory subunits cytochrome b (MT-CYB), cytochrome c1 (CYC1-1 or CYC1-2) and Rieske protein (UCR1-1 or UCR1-2), 2 core protein subunits MPPalpha1 (or MPPalpha2) and MPPB, and 5 low-molecular weight protein subunits QCR7-1 (or QCR7-2), UCRQ-1 (or UCRQ-2), QCR9, UCRY and probably QCR6-1 (or QCR6-2). The complex exists as an obligatory dimer and forms supercomplexes (SCs) in the inner mitochondrial membrane with NADH-ubiquinone oxidoreductase (complex I, CI), resulting in different assemblies (supercomplexes SCI(1)III(2) and SCI(2)III(4)).

It is found in the mitochondrion inner membrane. In terms of biological role, component of the ubiquinol-cytochrome c oxidoreductase, a multisubunit transmembrane complex that is part of the mitochondrial electron transport chain which drives oxidative phosphorylation. The respiratory chain contains 3 multisubunit complexes succinate dehydrogenase (complex II, CII), ubiquinol-cytochrome c oxidoreductase (cytochrome b-c1 complex, complex III, CIII) and cytochrome c oxidase (complex IV, CIV), that cooperate to transfer electrons derived from NADH and succinate to molecular oxygen, creating an electrochemical gradient over the inner membrane that drives transmembrane transport and the ATP synthase. The cytochrome b-c1 complex catalyzes electron transfer from ubiquinol to cytochrome c, linking this redox reaction to translocation of protons across the mitochondrial inner membrane, with protons being carried across the membrane as hydrogens on the quinol. In the process called Q cycle, 2 protons are consumed from the matrix, 4 protons are released into the intermembrane space and 2 electrons are passed to cytochrome c. The polypeptide is Cytochrome b-c1 complex subunit 6-2, mitochondrial (QCR6-2) (Arabidopsis thaliana (Mouse-ear cress)).